Reading from the N-terminus, the 79-residue chain is Small ribosomal subunit protein bS16c (79 aa).

This sequence belongs to the bacterial ribosomal protein bS16 family.

It localises to the plastid. It is found in the chloroplast. The protein is Small ribosomal subunit protein bS16c of Trieres chinensis (Marine centric diatom).